Here is a 565-residue protein sequence, read N- to C-terminus: Arginine--tRNA ligase (565 aa).

The short motif at 128–138 (ANPTGPLHVGH) is the 'HIGH' region element.

It belongs to the class-I aminoacyl-tRNA synthetase family. In terms of assembly, monomer.

It localises to the cytoplasm. It carries out the reaction tRNA(Arg) + L-arginine + ATP = L-arginyl-tRNA(Arg) + AMP + diphosphate. The sequence is that of Arginine--tRNA ligase from Albidiferax ferrireducens (strain ATCC BAA-621 / DSM 15236 / T118) (Rhodoferax ferrireducens).